Consider the following 164-residue polypeptide: Peptidyl-prolyl cis-trans isomerase A-like 4F (164 aa).

Residues 7–163 enclose the PPIase cyclophilin-type domain; the sequence is FFEITRDGKP…KKITIADCGQ (157 aa).

The protein belongs to the cyclophilin-type PPIase family. PPIase A subfamily.

The protein resides in the cytoplasm. The enzyme catalyses [protein]-peptidylproline (omega=180) = [protein]-peptidylproline (omega=0). Functionally, PPIases accelerate the folding of proteins. It catalyzes the cis-trans isomerization of proline imidic peptide bonds in oligopeptides. The sequence is that of Peptidyl-prolyl cis-trans isomerase A-like 4F from Homo sapiens (Human).